Reading from the N-terminus, the 201-residue chain is Cytochrome c oxidase assembly protein CtaG (201 aa).

Over 1–13 (MTDQGENEKKQRR) the chain is Cytoplasmic. Residues 14 to 36 (SNATIAVACLSFFVCMIGAAYAS) traverse the membrane as a helical; Signal-anchor for type II membrane protein segment. Topologically, residues 37 to 201 (VPLYRIFCQV…KAVGSTRNGG (165 aa)) are periplasmic.

Belongs to the COX11/CtaG family.

The protein resides in the cell inner membrane. Exerts its effect at some terminal stage of cytochrome c oxidase synthesis, probably by being involved in the insertion of the copper B into subunit I. This Brucella ovis (strain ATCC 25840 / 63/290 / NCTC 10512) protein is Cytochrome c oxidase assembly protein CtaG.